A 256-amino-acid chain; its full sequence is MANSKYEYVKSFEQPDILLQNVWIVVRIDGRSFHKFTTKHDYAKPNDDRGLSLMNRAALEVCKEFPDIVIAFGESDEYSFVLKKSCNLFERRSSKISSSIVSYFTSQFVYRWKEYFGEHELKYPPTFDSRCVLYPTDENIKDYLSWRQADTHINNLYNTCYWALVLKAGKTPIEAENELRGTFSDGKNEMLFSRFNINYNNLPAEYRKGSVIFKKPVQETNKETGLTKSKKRLVIEHVDIISEKFWKEYPDILASK.

3 residues coordinate Mg(2+): Asp29, Gly30, and Asp76. GTP is bound by residues 29–34 and 75–76; these read DGRSFH and SD.

The protein belongs to the tRNA(His) guanylyltransferase family. The cofactor is Mg(2+).

It is found in the cytoplasm. It carries out the reaction a 5'-end ribonucleotide-tRNA(His) + GTP + ATP + H2O = a 5'-end phospho-guanosine-ribonucleotide-tRNA(His) + AMP + 2 diphosphate + H(+). Adds a GMP to the 5'-end of tRNA(His) after transcription and RNase P cleavage. This Dictyostelium discoideum (Social amoeba) protein is Probable tRNA(His) guanylyltransferase (thg1).